Reading from the N-terminus, the 299-residue chain is Trimeric intracellular cation channel type A (299 aa).

Topologically, residues 1 to 18 (MELLSALSLGELALSFSR) are lumenal. Residues 19-39 (VPLFPVFDLSYFIVSILYLKY) traverse the membrane as a helical segment. Topologically, residues 40–51 (EPGAVELSRRHP) are cytoplasmic. The chain crosses the membrane as a helical span at residues 52–72 (IASWLCAMLHCFGSYILADLL). The Lumenal portion of the chain corresponds to 73–85 (LGEPLIDYFSNNS). Gly74 contacts Ca(2+). Residues 86 to 106 (SILLASAVWYLIFFCPLDLFY) form a helical membrane-spanning segment. Topologically, residues 107–144 (KCVCFLPVKLIFVAMKEVVRVRKIAVGIHHAHHHYHHG) are cytoplasmic. Residues Lys122 and Arg126 each coordinate a 1,2-diacyl-sn-glycero-3-phospho-(1D-myo-inositol-4,5-bisphosphate). A helical transmembrane segment spans residues 145-165 (WFVMIATGWVKGSGVALMSNF). At 166–178 (EQLLRGVWKPETN) the chain is on the lumenal side. The helical transmembrane segment at 179 to 199 (EILHMSFPTKASLYGAILFTL) threads the bilayer. At 200–209 (QQTRWLPVSK) the chain is on the cytoplasmic side. A helical transmembrane segment spans residues 210-230 (ASLIFIFTLFMVSCKVFLTAT). Topologically, residues 231 to 234 (HSHS) are lumenal. A helical transmembrane segment spans residues 235-255 (SPFDALEGYICPVLFGSACGG). At 256–299 (DHHHDNHGGSHSGGGPGAQHSAMPAKSKEELSEGSRKKKAKKAD) the chain is on the cytoplasmic side. Positions 260–299 (DNHGGSHSGGGPGAQHSAMPAKSKEELSEGSRKKKAKKAD) are disordered. The span at 281–290 (KSKEELSEGS) shows a compositional bias: basic and acidic residues.

Belongs to the TMEM38 family. Homotrimer; conformation seems to be controled by binding to diacylglycerol (DAG).

It is found in the sarcoplasmic reticulum membrane. It localises to the nucleus membrane. The catalysed reaction is K(+)(in) = K(+)(out). Channel activity is activated by a change of voltage within the sarcoplasmic reticulum lumen and blocked by luminal high Ca(2+) levels. Its function is as follows. Intracellular monovalent cation channel required for maintenance of rapid intracellular calcium release. Acts as a potassium counter-ion channel that functions in synchronization with calcium release from intracellular stores. Opened by a change of voltage within the sarcoplasmic reticulum lumen. This Homo sapiens (Human) protein is Trimeric intracellular cation channel type A.